The primary structure comprises 87 residues: Small ribosomal subunit protein bS18 (87 aa).

The protein belongs to the bacterial ribosomal protein bS18 family. As to quaternary structure, part of the 30S ribosomal subunit. Forms a tight heterodimer with protein bS6.

Functionally, binds as a heterodimer with protein bS6 to the central domain of the 16S rRNA, where it helps stabilize the platform of the 30S subunit. This Oleidesulfovibrio alaskensis (strain ATCC BAA-1058 / DSM 17464 / G20) (Desulfovibrio alaskensis) protein is Small ribosomal subunit protein bS18.